Reading from the N-terminus, the 655-residue chain is Ribonuclease 3 (655 aa).

Disordered regions lie at residues Met1–Lys148 and Leu171–Leu376. The segment at Met1–Ile400 is unknown. Residues Thr8–Lys20 are compositionally biased toward basic residues. Basic and acidic residues-rich tracts occupy residues Asn21 to Thr34 and Asp69 to Glu89. Positions Asn92–Lys102 are enriched in low complexity. The segment covering Gln103–Lys115 has biased composition (basic residues). Over residues Ala135–Lys148 the composition is skewed to polar residues. Residues Asn206–Lys223 are compositionally biased toward low complexity. Composition is skewed to polar residues over residues Pro229–Thr242 and Pro250–Pro259. Basic and acidic residues-rich tracts occupy residues Thr260 to Glu274 and Asp298 to Lys309. Positions Asn310–Asn332 are enriched in low complexity. A compositionally biased stretch (basic and acidic residues) spans Ser333–Gln350. Residues Lys351 to Asn360 show a composition bias toward low complexity. The segment at Tyr401–Lys655 is RNase 3. The RNase III domain maps to Leu432–Gly556. Glu472 contacts Mg(2+). Residue Asp476 is part of the active site. The Mg(2+) site is built by Asp542 and Glu545. Glu545 is a catalytic residue. Residues Asp582 to Gly649 enclose the DRBM domain.

It belongs to the ribonuclease III family. As to quaternary structure, homodimer. The cofactor is Mg(2+).

It is found in the cytoplasm. It carries out the reaction Endonucleolytic cleavage to 5'-phosphomonoester.. In terms of biological role, digests double-stranded RNA. Involved in the processing of primary rRNA transcript to yield the immediate precursors to the large and small rRNAs (23S and 16S). Processes some mRNAs, and tRNAs when they are encoded in the rRNA operon. Processes pre-crRNA and tracrRNA of type II CRISPR loci if present in the organism. This chain is Ribonuclease 3 (rnc), found in Mycoplasmoides gallisepticum (strain R(low / passage 15 / clone 2)) (Mycoplasma gallisepticum).